Reading from the N-terminus, the 213-residue chain is uncharacterized protein (213 aa).

The N-terminal stretch at 1–19 is a signal peptide; sequence MKKVLLLLFVLTIGLALSA. Cysteine 20 is lipidated: N-palmitoyl cysteine. Cysteine 20 is lipidated: S-diacylglycerol cysteine. Positions 20 to 62 are disordered; that stretch reads CSQSSDASEKEKPKEKKSQEELEKELDKELKKGGEPKTKKDDQ. Residues 26–62 show a composition bias toward basic and acidic residues; that stretch reads ASEKEKPKEKKSQEELEKELDKELKKGGEPKTKKDDQ.

The protein localises to the cell membrane. This is an uncharacterized protein from Bacillus subtilis (strain 168).